The sequence spans 315 residues: DNA-directed RNA polymerase subunit alpha (315 aa).

Positions 1–228 are alpha N-terminal domain (alpha-NTD); sequence MIEMEKPKVE…EHLNLFITLK (228 aa). The tract at residues 245 to 315 is alpha C-terminal domain (alpha-CTD); sequence KEKVLEMTIE…LGLGLRPSDE (71 aa).

This sequence belongs to the RNA polymerase alpha chain family. In terms of assembly, homodimer. The RNAP catalytic core consists of 2 alpha, 1 beta, 1 beta' and 1 omega subunit. When a sigma factor is associated with the core the holoenzyme is formed, which can initiate transcription.

The enzyme catalyses RNA(n) + a ribonucleoside 5'-triphosphate = RNA(n+1) + diphosphate. Functionally, DNA-dependent RNA polymerase catalyzes the transcription of DNA into RNA using the four ribonucleoside triphosphates as substrates. This Alkaliphilus metalliredigens (strain QYMF) protein is DNA-directed RNA polymerase subunit alpha.